The chain runs to 190 residues: uncharacterized protein (190 aa).

The N-terminal stretch at 1-15 (MKVFAYIALATVVAG) is a signal peptide.

It is found in the secreted. This is an uncharacterized protein from Arthroderma benhamiae (strain ATCC MYA-4681 / CBS 112371) (Trichophyton mentagrophytes).